The primary structure comprises 1173 residues: Protein GIGANTEA (1173 aa).

3 disordered regions span residues 150–187, 604–641, and 840–863; these read EQQN…RKPL, SGSK…NVKG, and SRTE…SGRP. Composition is skewed to polar residues over residues 162–172 and 613–633; these read SKATTSGSPTS and YAST…QTAN. The span at 854–863 shows a compositional bias: basic and acidic residues; it reads RHSDEGSGRP.

This sequence belongs to the GIGANTEA family. In terms of assembly, interacts with SPY. Interacts with ADO1 (via N-terminus) and ADO2. Interacts with ADO3 (via N-terminus). Interacts (via N-terminus) with CDF1. Interacts (via N-terminus) with TCP4. As to expression, widely expressed with highest levels in inflorescence apices, young flowers and young siliques.

The protein resides in the nucleus. It is found in the cytoplasm. In terms of biological role, involved in regulation of circadian rhythm and photoperiodic flowering. May play a role in maintenance of circadian amplitude and period length. Is involved in phytochrome B signaling. Stabilizes ADO3 and the circadian photoreceptor ADO1/ZTL. Regulates 'CONSTANS' (CO) in the long-day flowering pathway by modulating the ADO3-dependent protein stability of CDF1 and CDF2, but is not essential to activate CO transcription. Regulates, via the microRNA miR172, a CO-independent pathway that promotes photoperiodic flowering by inducing 'FLOWERING LOCUS T'. The chain is Protein GIGANTEA (GI) from Arabidopsis thaliana (Mouse-ear cress).